We begin with the raw amino-acid sequence, 505 residues long: Peroxisome proliferator-activated receptor gamma (505 aa).

O-linked (GlcNAc) threonine glycosylation occurs at Thr84. Ser112 bears the Phosphoserine; by MAPK mark. The nuclear receptor DNA-binding region spans 136-210 (AIECRVCGDK…VGMSHNAIRF (75 aa)). 2 consecutive NR C4-type zinc fingers follow at residues 139-159 (CRVC…CEGC) and 176-198 (CDLN…FQKC). The segment at 205–280 (HNAIRFGRMP…DKSPFVIYDM (76 aa)) is interaction with FAM120B. An NR LBD domain is found at 238–503 (DLRALAKHLY…HPLLQEIYKD (266 aa)). Lys252 participates in a covalent cross-link: Glycyl lysine isopeptide (Lys-Gly) (interchain with G-Cter in ubiquitin). Positions 495 to 503 (PLLQEIYKD) match the 9aaTAD motif.

Belongs to the nuclear hormone receptor family. NR1 subfamily. Interacts with FOXO1 (acetylated form). Heterodimer with other nuclear receptors, such as RXRA. The heterodimer with the retinoic acid receptor RXRA is called adipocyte-specific transcription factor ARF6. Interacts with NCOA6 coactivator, leading to a strong increase in transcription of target genes. Interacts with coactivator PPARBP, leading to a mild increase in transcription of target genes. Interacts with NOCA7 in a ligand-inducible manner. Interacts with NCOA1 and NCOA2 LXXLL motifs. Interacts with ASXL1, ASXL2, DNTTIP2, FAM120B, MAP2K1/MEK1, NR0B2, PDPK1, PRDM16, PRMT2 and TGFB1I1. Interacts (when activated by agonist) with PPP5C. Interacts with HELZ2 and THRAP3; the interaction stimulates the transcriptional activity of PPARG. Interacts with PER2, the interaction is ligand dependent and blocks PPARG recruitment to target promoters. Interacts with NOCT. Interacts with ACTN4. Interacts (when in the liganded conformation) with GPS2. Interacts with CRY1 and CRY2 in a ligand-dependent manner. In the absence of hormonal ligand, interacts with TACC1. In macrophages, interacts with PAQR3 and STUB1; the interactions promote PPARG poylubiquitination and STUB1-mediated degradation. In terms of processing, phosphorylated by MAPK. The phosphorylation inhibits PPAR gamma activity. Post-translationally, O-GlcNAcylation at Thr-84 reduces transcriptional activity in adipocytes. Phosphorylated at basal conditions and dephosphorylated when treated with the ligand. May be dephosphorylated by PPP5C. The phosphorylated form may be inactive and dephosphorylation at induces adipogenic activity. In terms of processing, ubiquitinated by E3 ubiquitin-protein ligase complex containing FBXO9; leading to proteasomal degradation. Ubiquitinated at Lys-252 by TRIM55 leading to proteasomal degradation. Ubiquitinated by E3 ubiquitin-protein ligase STUB1/CHIP; leading to proteasomal degradation. In terms of tissue distribution, highest expression in adipose tissue.

It is found in the nucleus. The protein localises to the cytoplasm. Its activity is regulated as follows. PDPK1 activates its transcriptional activity independently of its kinase activity. Its function is as follows. Nuclear receptor that binds peroxisome proliferators such as hypolipidemic drugs and fatty acids. Once activated by a ligand, the nuclear receptor binds to DNA specific PPAR response elements (PPRE) and modulates the transcription of its target genes, such as acyl-CoA oxidase. It therefore controls the peroxisomal beta-oxidation pathway of fatty acids. Key regulator of adipocyte differentiation and glucose homeostasis. ARF6 acts as a key regulator of the tissue-specific adipocyte P2 (aP2) enhancer. Acts as a critical regulator of gut homeostasis by suppressing NF-kappa-B-mediated pro-inflammatory responses. Plays a role in the regulation of cardiovascular circadian rhythms by regulating the transcription of BMAL1 in the blood vessels. This Rattus norvegicus (Rat) protein is Peroxisome proliferator-activated receptor gamma (Pparg).